Reading from the N-terminus, the 592-residue chain is Sodium- and chloride-dependent transporter XTRP3 (592 aa).

Topologically, residues 1–5 are cytoplasmic; that stretch reads MEKAR. A helical transmembrane segment spans residues 6–26; sequence PLWANSLQFVFACISYAVGLG. The Extracellular portion of the chain corresponds to 27–42; the sequence is NVWRFPYLCQMYGGGS. The helical transmembrane segment at 43-63 threads the bilayer; that stretch reads FLVPYIIMLIVEGMPLLYLEL. At 64-79 the chain is on the cytoplasmic side; that stretch reads AVGQRMRQGSIGAWRT. A helical transmembrane segment spans residues 80–100; that stretch reads ISPYLSGVGVASVVVSFFLSM. The Extracellular portion of the chain corresponds to 101-165; it reads YYNVINAWAF…ISPSLQENGG (65 aa). Asn131 is a glycosylation site (N-linked (GlcNAc...) asparagine). A helical transmembrane segment spans residues 166-186; the sequence is VQWEPALCLLLAWLVVYLCIL. The Cytoplasmic portion of the chain corresponds to 187–194; that stretch reads RGTESTGK. Residues 195-215 traverse the membrane as a helical segment; sequence VVYFTASLPYCVLIIYLIRGL. The Extracellular segment spans residues 216 to 241; it reads TLHGATNGLMYMFTPKIEQLANPKAW. A helical membrane pass occupies residues 242 to 262; the sequence is INAATQIFFSLGLGFGSLIAF. Residues 263 to 276 lie on the Cytoplasmic side of the membrane; sequence ASYNEPSNNCQKHA. The helical transmembrane segment at 277-297 threads the bilayer; that stretch reads IIVSLINSFTSIFASIVTFSI. At 298–389 the chain is on the extracellular side; that stretch reads YGFKATFNYE…EAIKNMEVSQ (92 aa). Asn357 carries N-linked (GlcNAc...) asparagine glycosylation. Residues 390–410 form a helical membrane-spanning segment; sequence LWSVLYFFMLLMLGIGSMLGN. Over 411–431 the chain is Cytoplasmic; the sequence is TAAILTPLTDSKIISSHLPKE. The helical transmembrane segment at 432-452 threads the bilayer; it reads AISGLVCLVNCAIGMVFTMEA. At 453–465 the chain is on the extracellular side; sequence GNYWFDIFNDYAA. A helical transmembrane segment spans residues 466–486; sequence TLSLLLIVLVETIAVCYVYGL. The Cytoplasmic segment spans residues 487–504; sequence RRFESDLKAMTGRAVSWY. A helical membrane pass occupies residues 505–525; sequence WKVMWAGVSPLLIVSLFVFYL. Residues 526-554 lie on the Extracellular side of the membrane; the sequence is SDYILTGTLKYQAWDASQGQLVTKDYPAY. A helical membrane pass occupies residues 555-575; sequence ALAVIGLLVASSTMCIPLAAL. The Cytoplasmic segment spans residues 576-592; sequence GTFVQRRLKRGDADPVA.

Belongs to the sodium:neurotransmitter symporter (SNF) (TC 2.A.22) family. SLC6A20 subfamily. As to expression, kidney and small intestine. Expressed in the S3 segment of the proximal tubule. Expressed in neurons.

The protein resides in the apical cell membrane. The enzyme catalyses L-proline(out) + chloride(out) + 2 Na(+)(out) = L-proline(in) + chloride(in) + 2 Na(+)(in). The catalysed reaction is L-pipecolate(out) + chloride(out) + 2 Na(+)(out) = L-pipecolate(in) + chloride(in) + 2 Na(+)(in). It carries out the reaction sarcosine(out) + chloride(out) + 2 Na(+)(out) = sarcosine(in) + chloride(in) + 2 Na(+)(in). It catalyses the reaction N-methyl-L-proline(out) + chloride(out) + 2 Na(+)(out) = N-methyl-L-proline(in) + chloride(in) + 2 Na(+)(in). The enzyme catalyses 2-methyl-2-(methylamino)propanoate(out) + chloride(out) + 2 Na(+)(out) = 2-methyl-2-(methylamino)propanoate(in) + chloride(in) + 2 Na(+)(in). The catalysed reaction is glycine betaine(out) + chloride(out) + 2 Na(+)(out) = glycine betaine(in) + chloride(in) + 2 Na(+)(in). It carries out the reaction glycine(out) + chloride(out) + 2 Na(+)(out) = glycine(in) + chloride(in) + 2 Na(+)(in). In terms of biological role, mediates the Na(+)- and Cl(-)-dependent uptake of imino acids such as L-proline, N-methyl-L-proline and pipecolate as well as N-methylated amino acids. Also transports glycine, regulates proline and glycine homeostasis in the brain playing a role in the modulation of NMDAR currents. This Homo sapiens (Human) protein is Sodium- and chloride-dependent transporter XTRP3.